The chain runs to 221 residues: Probable serine protease inhibitor 6 (221 aa).

The first 22 residues, 1–22 (MKCLFLLCLCLFPIVVFSSTFT), serve as a signal peptide directing secretion. A propeptide spanning residues 23-28 (SQNPIN) is cleaved from the precursor. The Vacuolar targeting signal motif lies at 25 to 30 (NPINLP). 2 disulfide bridges follow: Cys76–Cys125 and Cys174–Cys191.

Belongs to the protease inhibitor I3 (leguminous Kunitz-type inhibitor) family.

It localises to the vacuole. Inhibitor of trypsin (serine protease). May protect the plant by inhibiting proteases of invading organisms. The chain is Probable serine protease inhibitor 6 from Solanum tuberosum (Potato).